A 236-amino-acid chain; its full sequence is Small ribosomal subunit protein uS2c (236 aa).

This sequence belongs to the universal ribosomal protein uS2 family.

It is found in the plastid. The protein resides in the chloroplast. The sequence is that of Small ribosomal subunit protein uS2c (rps2) from Citrus sinensis (Sweet orange).